A 458-amino-acid chain; its full sequence is ATP synthase subunit beta (458 aa).

148-155 (GGAGVGKT) contacts ATP.

It belongs to the ATPase alpha/beta chains family. In terms of assembly, F-type ATPases have 2 components, CF(1) - the catalytic core - and CF(0) - the membrane proton channel. CF(1) has five subunits: alpha(3), beta(3), gamma(1), delta(1), epsilon(1). CF(0) has three main subunits: a(1), b(2) and c(9-12). The alpha and beta chains form an alternating ring which encloses part of the gamma chain. CF(1) is attached to CF(0) by a central stalk formed by the gamma and epsilon chains, while a peripheral stalk is formed by the delta and b chains.

The protein localises to the cell inner membrane. It catalyses the reaction ATP + H2O + 4 H(+)(in) = ADP + phosphate + 5 H(+)(out). Its function is as follows. Produces ATP from ADP in the presence of a proton gradient across the membrane. The catalytic sites are hosted primarily by the beta subunits. This is ATP synthase subunit beta from Francisella tularensis subsp. tularensis (strain FSC 198).